Consider the following 383-residue polypeptide: 1-deoxy-D-xylulose 5-phosphate reductoisomerase (383 aa).

NADPH-binding residues include threonine 10, glycine 11, serine 12, isoleucine 13, and asparagine 123. Residue lysine 124 participates in 1-deoxy-D-xylulose 5-phosphate binding. Glutamate 125 contacts NADPH. Aspartate 149 is a binding site for Mn(2+). 4 residues coordinate 1-deoxy-D-xylulose 5-phosphate: serine 150, glutamate 151, serine 175, and histidine 198. Position 151 (glutamate 151) interacts with Mn(2+). Residue glycine 204 participates in NADPH binding. 1-deoxy-D-xylulose 5-phosphate is bound by residues serine 211, asparagine 216, lysine 217, and glutamate 220. Glutamate 220 serves as a coordination point for Mn(2+).

The protein belongs to the DXR family. Requires Mg(2+) as cofactor. The cofactor is Mn(2+).

The catalysed reaction is 2-C-methyl-D-erythritol 4-phosphate + NADP(+) = 1-deoxy-D-xylulose 5-phosphate + NADPH + H(+). Its pathway is isoprenoid biosynthesis; isopentenyl diphosphate biosynthesis via DXP pathway; isopentenyl diphosphate from 1-deoxy-D-xylulose 5-phosphate: step 1/6. Catalyzes the NADPH-dependent rearrangement and reduction of 1-deoxy-D-xylulose-5-phosphate (DXP) to 2-C-methyl-D-erythritol 4-phosphate (MEP). In Desulfosudis oleivorans (strain DSM 6200 / JCM 39069 / Hxd3) (Desulfococcus oleovorans), this protein is 1-deoxy-D-xylulose 5-phosphate reductoisomerase.